The chain runs to 592 residues: V-type ATP synthase alpha chain 2 (592 aa).

237 to 244 (GGFGTGKT) contributes to the ATP binding site.

It belongs to the ATPase alpha/beta chains family.

The catalysed reaction is ATP + H2O + 4 H(+)(in) = ADP + phosphate + 5 H(+)(out). Produces ATP from ADP in the presence of a proton gradient across the membrane. The V-type alpha chain is a catalytic subunit. This is V-type ATP synthase alpha chain 2 from Clostridium tetani (strain Massachusetts / E88).